The chain runs to 208 residues: Ribosomal RNA small subunit methyltransferase G (208 aa).

S-adenosyl-L-methionine-binding positions include G78, F83, 101–103 (ERS), 129–130 (IE), and R142.

It belongs to the methyltransferase superfamily. RNA methyltransferase RsmG family.

The protein localises to the cytoplasm. In terms of biological role, specifically methylates the N7 position of a guanine in 16S rRNA. This chain is Ribosomal RNA small subunit methyltransferase G, found in Borreliella burgdorferi (strain ATCC 35210 / DSM 4680 / CIP 102532 / B31) (Borrelia burgdorferi).